The sequence spans 347 residues: Dihydroorotase (347 aa).

Zn(2+) contacts are provided by His14 and His16. Residues 16-18 (HLR) and Asn42 contribute to the substrate site. Residues Lys100, His137, and His175 each contribute to the Zn(2+) site. The residue at position 100 (Lys100) is an N6-carboxylysine. Residue His137 participates in substrate binding. Residue Leu220 coordinates substrate. Asp248 lines the Zn(2+) pocket. Asp248 is a catalytic residue. 2 residues coordinate substrate: His252 and Ala264.

The protein belongs to the metallo-dependent hydrolases superfamily. DHOase family. Class II DHOase subfamily. In terms of assembly, homodimer. Zn(2+) is required as a cofactor.

The enzyme catalyses (S)-dihydroorotate + H2O = N-carbamoyl-L-aspartate + H(+). It participates in pyrimidine metabolism; UMP biosynthesis via de novo pathway; (S)-dihydroorotate from bicarbonate: step 3/3. Functionally, catalyzes the reversible cyclization of carbamoyl aspartate to dihydroorotate. This is Dihydroorotase from Jannaschia sp. (strain CCS1).